The sequence spans 53 residues: Large ribosomal subunit protein bL33A (53 aa).

Belongs to the bacterial ribosomal protein bL33 family.

This chain is Large ribosomal subunit protein bL33A (rpmG1), found in Mycoplasma pneumoniae (strain ATCC 29342 / M129 / Subtype 1) (Mycoplasmoides pneumoniae).